Consider the following 221-residue polypeptide: Queuosine precursor transporter (221 aa).

Over 1 to 12 (MNVFSQTQRYKA) the chain is Cytoplasmic. A helical transmembrane segment spans residues 13–33 (LFWLSLFHLLVITSSNYLVQL). A topological domain (periplasmic) is located at residue Pro34. Residues 35 to 55 (VSILGFHTTWGAFSFPFIFLA) traverse the membrane as a helical segment. Topologically, residues 56-70 (TDLTVRIFGAPLARR) are cytoplasmic. Residues 71-91 (IIFAVMIPALLISYVISSLFY) form a helical membrane-spanning segment. Residues 92–97 (MGSWQG) lie on the Periplasmic side of the membrane. Residues 98–118 (FGALAHFNLFVARIATASFMA) traverse the membrane as a helical segment. Residues 119–143 (YALGQILDVHVFNRLRQSRRWWLAP) lie on the Cytoplasmic side of the membrane. Residues 144 to 164 (TASTLFGNVSDTLAFFFIAFW) form a helical membrane-spanning segment. The Periplasmic segment spans residues 165-184 (RSPDAFMAEHWMEIALVDYC). A helical transmembrane segment spans residues 185–205 (FKVLISIVFFLPMYGVLLNML). The Cytoplasmic portion of the chain corresponds to 206-221 (LKRLADKSEINALQAS).

It belongs to the vitamin uptake transporter (VUT/ECF) (TC 2.A.88) family. Q precursor transporter subfamily.

It localises to the cell inner membrane. Its function is as follows. Involved in the import of queuosine (Q) precursors, required for Q precursor salvage. Transports 7-cyano-7-deazaguanine (preQ(0)) and 7-aminomethyl-7-deazaguanine (preQ(1)), with a preference for preQ(0). In Escherichia coli (strain K12), this protein is Queuosine precursor transporter (yhhQ).